We begin with the raw amino-acid sequence, 218 residues long: Ribose-5-phosphate isomerase A (218 aa).

Residues 28 to 31 (TGST), 81 to 84 (DSAD), and 94 to 97 (KGGG) contribute to the substrate site. Glu103 functions as the Proton acceptor in the catalytic mechanism. Lys121 serves as a coordination point for substrate.

Belongs to the ribose 5-phosphate isomerase family. In terms of assembly, homodimer.

It catalyses the reaction aldehydo-D-ribose 5-phosphate = D-ribulose 5-phosphate. Its pathway is carbohydrate degradation; pentose phosphate pathway; D-ribose 5-phosphate from D-ribulose 5-phosphate (non-oxidative stage): step 1/1. In terms of biological role, catalyzes the reversible conversion of ribose-5-phosphate to ribulose 5-phosphate. In Buchnera aphidicola subsp. Baizongia pistaciae (strain Bp), this protein is Ribose-5-phosphate isomerase A.